The following is a 387-amino-acid chain: Phosphoglycerate kinase (387 aa).

Residues 21 to 23 (DLN), R36, 59 to 62 (HLGR), R113, and R146 contribute to the substrate site. ATP-binding positions include K197, E314, and 340 to 343 (GGDT).

This sequence belongs to the phosphoglycerate kinase family. As to quaternary structure, monomer.

It is found in the cytoplasm. The catalysed reaction is (2R)-3-phosphoglycerate + ATP = (2R)-3-phospho-glyceroyl phosphate + ADP. Its pathway is carbohydrate degradation; glycolysis; pyruvate from D-glyceraldehyde 3-phosphate: step 2/5. In Pseudomonas putida (strain ATCC 700007 / DSM 6899 / JCM 31910 / BCRC 17059 / LMG 24140 / F1), this protein is Phosphoglycerate kinase.